The following is a 483-amino-acid chain: PAT complex subunit CCDC47 (483 aa).

Positions 1–20 (MKGFHAFCVILLIFGSVSEA) are cleaved as a signal peptide. Over 21–135 (KFDDFEDEED…PAHLQNSWES (115 aa)) the chain is Cytoplasmic. Residues 44–118 (DVAEDSVTES…PDTSSSKSKD (75 aa)) form a disordered region. A compositionally biased stretch (acidic residues) spans 60–104 (TEDDEDETTVELEGQDESQEGDFEDADTQEGDTESEPYDDEEFEG). Residues 105 to 118 (YEDKPDTSSSKSKD) are compositionally biased toward basic and acidic residues. A helical membrane pass occupies residues 136-156 (YYLEILMVTGLLAYIMNYIIG). Topologically, residues 157–483 (KNKNSRLAQA…KMKQIKVKAM (327 aa)) are lumenal. Asn-178 is a glycosylation site (N-linked (GlcNAc...) asparagine). The tract at residues 424-483 (QRQEAAQSRREEKKRAEKERIMNEEDPEKQRRLEEAALRREQKKLEKKQMKMKQIKVKAM) is disordered. The span at 430–472 (QSRREEKKRAEKERIMNEEDPEKQRRLEEAALRREQKKLEKKQ) shows a compositional bias: basic and acidic residues. Residues 450-483 (PEKQRRLEEAALRREQKKLEKKQMKMKQIKVKAM) are a coiled coil. Positions 473 to 483 (MKMKQIKVKAM) are enriched in basic residues.

This sequence belongs to the CCDC47 family. Component of the PAT complex, composed of WDR83OS/Asterix and CCDC47. The PAT complex is part of the multi-pass translocon (MPT) complex, composed of three subcomplexes, the GEL complex (composed of RAB5IF/OPTI and TMCO1), the BOS complex (composed of NCLN/Nicalin, NOMO1 and TMEM147) and the PAT complex (composed of WDR83OS/Asterix and CCDC47). The MPT complex associates with the SEC61 complex. Interacts with VCP, HSPA5, DERL1, DERL2 and SELENOS.

It localises to the endoplasmic reticulum membrane. Its subcellular location is the rough endoplasmic reticulum membrane. In terms of biological role, component of the multi-pass translocon (MPT) complex that mediates insertion of multi-pass membrane proteins into the lipid bilayer of membranes. The MPT complex takes over after the SEC61 complex: following membrane insertion of the first few transmembrane segments of proteins by the SEC61 complex, the MPT complex occludes the lateral gate of the SEC61 complex to promote insertion of subsequent transmembrane regions. Within the MPT complex, the PAT subcomplex sequesters any highly polar regions in the transmembrane domains away from the non-polar membrane environment until they can be buried in the interior of the fully assembled protein. Within the PAT subcomplex, CCDC47 occludes the lateral gate of the SEC61 complex. Involved in the regulation of calcium ion homeostasis in the ER. Required for proper protein degradation via the ERAD (ER-associated degradation) pathway. Has an essential role in the maintenance of ER organization during embryogenesis. The protein is PAT complex subunit CCDC47 (CCDC47) of Bos taurus (Bovine).